The sequence spans 164 residues: Anterior gradient protein 3 (164 aa).

A signal peptide spans 1–19 (MYFPMIELTLVLLASSNLA). A Prevents secretion from ER motif is present at residues 161–164 (QTEL).

This sequence belongs to the AGR family.

It localises to the endoplasmic reticulum. The protein resides in the cytoplasm. Its function is as follows. Required for calcium-mediated regulation of ciliary beat frequency in the airway. The polypeptide is Anterior gradient protein 3 (Xenopus tropicalis (Western clawed frog)).